Consider the following 1279-residue polypeptide: Sterol regulatory element-binding protein cleavage-activating protein (1279 aa).

The Cytoplasmic segment spans residues 1–18; sequence MTLTERLREKISQAFYNH. A helical membrane pass occupies residues 19-39; the sequence is GLLCASYPIPIILFTGLCILA. At 40 to 279 the chain is on the lumenal side; that stretch reads CCYPLLKLPL…SLVHVHFKEE (240 aa). The interval 46-284 is loop-1; sequence KLPLPGTGPV…HFKEEIGIAE (239 aa). The interval 60-81 is disordered; sequence PVKDYSPPPSASDHKPGEPSEQ. An N-linked (GlcNAc...) asparagine glycan is attached at Asn-263. A helical transmembrane segment spans residues 280–300; sequence IGIAELIPLVTTYIILFAYIY. The SSD domain occupies 284-442; the sequence is ELIPLVTTYI…MPFFTTVLSI (159 aa). The Cytoplasmic segment spans residues 301–312; the sequence is FSTRKIDMVKSK. Residues 313–333 form a helical membrane-spanning segment; it reads WGLALAAVVTVLSSLLMSVGL. Over 334–344 the chain is Lumenal; it reads CTLFGLTPTLN. A helical transmembrane segment spans residues 345-365; that stretch reads GGEIFPYLVVVIGLENVLVLT. The Cytoplasmic segment spans residues 366 to 401; it reads KSVVSTPVDLEVKLRIAQGLSSESWSIMKNMATELG. A helical membrane pass occupies residues 402–422; sequence IILIGYFTLVPAIQEFCLFAV. Position 423 (Val-423) is a topological domain, lumenal. Residues 424–444 form a helical membrane-spanning segment; it reads GLVSDFFLQMPFFTTVLSIDI. At 445-518 the chain is on the cytoplasmic side; the sequence is RRMELADLNK…FLARTRLAQR (74 aa). Residues 447–452 carry the ER export signal motif; the sequence is MELADL. Glycyl lysine isopeptide (Lys-Gly) (interchain with G-Cter in ubiquitin) cross-links involve residues Lys-454 and Lys-466. The helical transmembrane segment at 519–539 threads the bilayer; sequence LIMAGTVVWIGILAYTDPAGL. A loop-7 region spans residues 535–710; it reads DPAGLRTYLA…QAHRDVTLYK (176 aa). Residues 540–707 are Lumenal-facing; that stretch reads RTYLAAQVTE…GVAQAHRDVT (168 aa). The tract at residues 588-617 is disordered; that stretch reads LENQTLPGEPPEPGGQAEGVHDSPAPEVTW. 2 N-linked (GlcNAc...) asparagine glycosylation sites follow: Asn-590 and Asn-641. Positions 668-696 are disordered; the sequence is EGRHPQDSRSAWSPPQPAQGGLWDAGPKG. A helical transmembrane segment spans residues 708 to 728; that stretch reads LYKVAALGLATGILLVLLLCL. Topologically, residues 729 to 1279 are cytoplasmic; that stretch reads YRVLCPRNYG…YVPSVLEKLD (551 aa). The tract at residues 730-1279 is interaction with SREBF2; that stretch reads RVLCPRNYGQ…YVPSVLEKLD (550 aa). One copy of the WD 1 repeat lies at 770-810; that stretch reads VLRGHLMDIECLASDGMLLVSCCLAGHVCVWDAQTGDCLTR. Phosphoserine is present on residues Ser-821, Ser-837, Ser-843, and Ser-850. Disordered regions lie at residues 834-868, 883-903, and 925-959; these read ERLS…LFGD, HPRL…CRRT, and VPMH…GSPS. Residues 885–896 are compositionally biased toward basic and acidic residues; sequence RLPELDHPEPRH. Residues 929-944 show a composition bias toward pro residues; sequence TPAPRPPSPGPTPPQT. Ser-936 carries the phosphoserine modification. WD repeat units follow at residues 952–1002 and 1005–1042; these read PPEK…LRCS and EVAS…ALSP. Arg-1051 carries the post-translational modification Omega-N-methylarginine. 4 WD repeats span residues 1077–1114, 1117–1155, 1158–1195, and 1197–1235; these read AHQK…CLFT, GHSG…RVSH, AHRG…KLYS, and QQDL…LLQT.

Belongs to the WD repeat SCAP family. In terms of assembly, membrane region forms a homotetramer. Component of the SCAP-SREBP complex (composed of SCAP and SREBF1/SREBP1 or SREBF2/SREBP2); interacts with SREBF1/SREBP1 or SREBF2/SREBP2 through its C-terminal cytoplasmic domain. Forms a ternary complex with INSIG1 or INSIG2 through its transmembrane domains at high sterol concentrations. Interacts with PAQR3; the interaction anchors the SCAP-SREBP complex to the Golgi apparatus in low cholesterol conditions. Interacts with the SEC23-SEC24 complex in a SAR1-GTP-dependent manner through an ER export signal in its third cytoplasmic loop. Interacts with RNF139; the interaction inhibits the interaction of SCAP with SEC24B and hampering the ER to Golgi transport of the SCAP-SREBP complex. Interacts with SPRING1. Ubiquitinated at Lys-454 and Lys-466. RNF145 triggers ubiquitination of SCAP, likely inhibiting SCAP-SREBP complex transport to the Golgi apparatus and the subsequent processing/maturation of SREBF2/SREBP2. In terms of tissue distribution, widely expressed with higher levels in lung, kidney, gut, brain and adipose tissue. As to expression, expressed in liver and muscle. Isoform 3 expressed in testis. Expressed in testis.

It localises to the endoplasmic reticulum membrane. Its subcellular location is the golgi apparatus membrane. The protein resides in the cytoplasmic vesicle. It is found in the COPII-coated vesicle membrane. Functionally, escort protein required for cholesterol as well as lipid homeostasis. Regulates export of the SCAP-SREBP complex from the endoplasmic reticulum to the Golgi upon low cholesterol, thereby regulating the processing of sterol regulatory element-binding proteins (SREBPs) SREBF1/SREBP1 and SREBF2/SREBP2. At high sterol concentrations, formation of a ternary complex with INSIG (INSIG1 or INSIG2) leads to mask the ER export signal in SCAP, promoting retention of the complex in the endoplasmic reticulum. Low sterol concentrations trigger release of INSIG, a conformational change in the SSD domain of SCAP, unmasking of the ER export signal, promoting recruitment into COPII-coated vesicles and transport of the SCAP-SREBP to the Golgi: in the Golgi, SREBPs are then processed, releasing the transcription factor fragment of SREBPs from the membrane, its import into the nucleus and up-regulation of LDLR, INSIG1 and the mevalonate pathway. Binds cholesterol via its SSD domain. This Sus scrofa (Pig) protein is Sterol regulatory element-binding protein cleavage-activating protein.